The primary structure comprises 394 residues: Elongation factor Tu (394 aa).

The tr-type G domain maps to 10–204; that stretch reads KPHVNVGTIG…ALDTYIPEPE (195 aa). Residues 19-26 are G1; the sequence is GHVDHGKT. 19 to 26 is a binding site for GTP; the sequence is GHVDHGKT. A Mg(2+)-binding site is contributed by T26. A G2 region spans residues 60–64; sequence GITIN. Residues 81–84 are G3; it reads DCPG. GTP is bound by residues 81 to 85 and 136 to 139; these read DCPGH and NKCD. The segment at 136-139 is G4; it reads NKCD. The segment at 174–176 is G5; the sequence is SAL.

It belongs to the TRAFAC class translation factor GTPase superfamily. Classic translation factor GTPase family. EF-Tu/EF-1A subfamily. As to quaternary structure, monomer.

The protein localises to the cytoplasm. The catalysed reaction is GTP + H2O = GDP + phosphate + H(+). GTP hydrolase that promotes the GTP-dependent binding of aminoacyl-tRNA to the A-site of ribosomes during protein biosynthesis. In Shewanella halifaxensis (strain HAW-EB4), this protein is Elongation factor Tu.